The primary structure comprises 399 residues: L-methionine gamma-lyase (399 aa).

Pyridoxal 5'-phosphate is bound by residues 59–61 (YTR) and 89–90 (GI). A substrate-binding site is contributed by Tyr114. 209-211 (SAT) lines the pyridoxal 5'-phosphate pocket. Residue Lys212 is modified to N6-(pyridoxal phosphate)lysine. Position 376 (Arg376) interacts with substrate.

This sequence belongs to the trans-sulfuration enzymes family. L-methionine gamma-lyase subfamily. In terms of assembly, homotetramer; dimer of active dimers. Pyridoxal 5'-phosphate is required as a cofactor.

It carries out the reaction L-methionine + H2O = methanethiol + 2-oxobutanoate + NH4(+). The enzyme catalyses L-homocysteine + H2O = 2-oxobutanoate + hydrogen sulfide + NH4(+) + H(+). In terms of biological role, catalyzes the alpha,gamma-elimination of L-methionine to produce methanethiol, 2-oxobutanoate and ammonia; methanethiol (methyl mercaptan) is considered to be one of the main causes of the oral malodor in periodontal disease and may also play a role in the pathogenicity of P.gingivalis in that disease. Is also able to catalyze the alpha,gamma-elimination of L-homocysteine. This is L-methionine gamma-lyase from Porphyromonas gingivalis (strain ATCC BAA-308 / W83).